Here is a 202-residue protein sequence, read N- to C-terminus: Peptide methionine sulfoxide reductase B2, chloroplastic (202 aa).

Residues 1–63 constitute a chloroplast transit peptide; it reads MAFNIITPGR…RRGFHGGRIV (63 aa). Residues 77 to 198 form the MsrB domain; sequence EEEWRAILSP…NSISLKFTPE (122 aa). The Zn(2+) site is built by Cys-116, Cys-119, Cys-162, and Cys-165. Cys-134 and Cys-187 are disulfide-bonded. The active-site Nucleophile is the Cys-187.

It belongs to the MsrB Met sulfoxide reductase family. It depends on Zn(2+) as a cofactor. Expressed in stems, young leaves, floral buds and flowers. Expressed at low levels in roots, mature leaves and siliques (at protein level).

The protein localises to the plastid. It localises to the chloroplast. It carries out the reaction L-methionyl-[protein] + [thioredoxin]-disulfide + H2O = L-methionyl-(R)-S-oxide-[protein] + [thioredoxin]-dithiol. Its function is as follows. Catalyzes the reduction of methionine sulfoxide (MetSO) to methionine in proteins. Specifically reduces the MetSO R-enantiomer. Plays a protective role against oxidative stress by restoring activity to proteins that have been inactivated by methionine oxidation. May play an essential function in association with MSRB1 in maintaining vegetative growth during environmental constraints, through the preservation of photosynthetic antennae. MSRB1 and MSRB2 account for most of the leaf peptide MSR capacity. This Arabidopsis thaliana (Mouse-ear cress) protein is Peptide methionine sulfoxide reductase B2, chloroplastic.